A 395-amino-acid polypeptide reads, in one-letter code: Elongation factor Tu (395 aa).

The tr-type G domain occupies 10–204 (LPHVNIGTIG…AVDEYIPTPQ (195 aa)). The segment at 19 to 26 (GHVDHGKT) is G1. Position 19-26 (19-26 (GHVDHGKT)) interacts with GTP. Residue T26 coordinates Mg(2+). A G2 region spans residues 60–64 (GITIN). Residues 81-84 (DCPG) are G3. GTP-binding positions include 81 to 85 (DCPGH) and 136 to 139 (NKCD). Residues 136–139 (NKCD) are G4. The G5 stretch occupies residues 174–176 (SAL).

This sequence belongs to the TRAFAC class translation factor GTPase superfamily. Classic translation factor GTPase family. EF-Tu/EF-1A subfamily. Monomer.

It is found in the cytoplasm. It catalyses the reaction GTP + H2O = GDP + phosphate + H(+). In terms of biological role, GTP hydrolase that promotes the GTP-dependent binding of aminoacyl-tRNA to the A-site of ribosomes during protein biosynthesis. The sequence is that of Elongation factor Tu from Mycoplasma capricolum subsp. capricolum (strain California kid / ATCC 27343 / NCTC 10154).